The primary structure comprises 78 residues: Large ribosomal subunit protein bL28 (78 aa).

The protein belongs to the bacterial ribosomal protein bL28 family.

This Leifsonia xyli subsp. xyli (strain CTCB07) protein is Large ribosomal subunit protein bL28.